The chain runs to 357 residues: Cinnamyl alcohol dehydrogenase 1 (357 aa).

Cysteine 47 is a Zn(2+) binding site. Threonine 49 is an NADP(+) binding site. 7 residues coordinate Zn(2+): histidine 69, glutamate 70, cysteine 100, cysteine 103, cysteine 106, cysteine 114, and cysteine 163. Residues threonine 167, 188-193 (GLGGVG), 211-216 (SSSDKK), threonine 251, glycine 275, and 298-300 (SFI) contribute to the NADP(+) site.

This sequence belongs to the zinc-containing alcohol dehydrogenase family. Homodimer. Zn(2+) serves as cofactor. As to expression, expressed in leaves, mainly in peltate glands.

The enzyme catalyses (E)-cinnamyl alcohol + NADP(+) = (E)-cinnamaldehyde + NADPH + H(+). It catalyses the reaction (E)-coniferol + NADP(+) = (E)-coniferaldehyde + NADPH + H(+). The catalysed reaction is (E)-sinapyl alcohol + NADP(+) = (E)-sinapaldehyde + NADPH + H(+). It carries out the reaction (E)-4-coumaroyl alcohol + NADP(+) = (E)-4-coumaraldehyde + NADPH + H(+). The enzyme catalyses (E)-caffeyl alcohol + NADP(+) = (E)-caffeyl aldehyde + NADPH + H(+). Its pathway is aromatic compound metabolism; phenylpropanoid biosynthesis. 60% inhibition by 5 mM Ca(+), Mg(+) or Cu(+). Its function is as follows. Involved in the production of citral, a mixture of geranial and neral with a strong lemony scent. Reversibly oxidizes geraniol to produce geranial at half the efficiency compared with its activity with cinnamyl alcohol. Does not use nerol and neral as substrates. This Ocimum basilicum (Sweet basil) protein is Cinnamyl alcohol dehydrogenase 1 (CAD1).